Here is a 530-residue protein sequence, read N- to C-terminus: Chondroitin sulfate N-acetylgalactosaminyltransferase 1 (530 aa).

Topologically, residues 1-12 (MVRRGLLGWISR) are cytoplasmic. A helical; Signal-anchor for type II membrane protein transmembrane segment spans residues 13-33 (VVILLVLLCCAISVLYMLACT). The Lumenal portion of the chain corresponds to 34-530 (PKGDQEQLGL…QKQKASSKKT (497 aa)). Residues 57-93 (AVLQEREEQHRNYVNSLKRQIAQLKDELQARSEQFRS) adopt a coiled-coil conformation. The interval 88–107 (SEQFRSGQDQASDATSLRSG) is disordered. Polar residues predominate over residues 91–105 (FRSGQDQASDATSLR). N-linked (GlcNAc...) asparagine glycosylation is found at N313 and N322. A divalent metal cation-binding residues include D358 and H475.

The protein belongs to the chondroitin N-acetylgalactosaminyltransferase family.

The protein localises to the golgi apparatus. Its subcellular location is the golgi stack membrane. It carries out the reaction 3-O-(beta-D-GlcA-(1-&gt;3)-beta-D-Gal-(1-&gt;3)-beta-D-Gal-(1-&gt;4)-beta-D-Xyl)-L-seryl-[protein] + UDP-N-acetyl-alpha-D-galactosamine = 3-O-(beta-D-GalNAc-(1-&gt;4)-beta-D-GlcA-(1-&gt;3)-beta-D-Gal-(1-&gt;3)-beta-D-Gal-(1-&gt;4)-beta-D-Xyl)-L-seryl-[protein] + UDP + H(+). In terms of biological role, transfers 1,4-N-acetylgalactosamine (GalNAc) from UDP-GalNAc to the non-reducing end of glucuronic acid (GlcUA). Required for addition of the first GalNAc to the core tetrasaccharide linker and for elongation of chondroitin chains. Important role in chondroitin chain biosynthesis in cartilage formation, and subsequent endochondral ossification. Moreover, is involved in the metabolism of aggrecan. This chain is Chondroitin sulfate N-acetylgalactosaminyltransferase 1, found in Mus musculus (Mouse).